A 273-amino-acid polypeptide reads, in one-letter code: Large ribosomal subunit protein uL2 (273 aa).

Positions 221-273 are disordered; that stretch reads RGTAMNPVDHPHGGGEGRNFGKHPVTPWGVQTKGKKTRHNKRTDKFIVRRRGK. Basic residues predominate over residues 253–273; the sequence is KGKKTRHNKRTDKFIVRRRGK.

It belongs to the universal ribosomal protein uL2 family. Part of the 50S ribosomal subunit. Forms a bridge to the 30S subunit in the 70S ribosome.

Functionally, one of the primary rRNA binding proteins. Required for association of the 30S and 50S subunits to form the 70S ribosome, for tRNA binding and peptide bond formation. It has been suggested to have peptidyltransferase activity; this is somewhat controversial. Makes several contacts with the 16S rRNA in the 70S ribosome. In Glaesserella parasuis serovar 5 (strain SH0165) (Haemophilus parasuis), this protein is Large ribosomal subunit protein uL2.